Reading from the N-terminus, the 461-residue chain is Xyloglucan 6-xylosyltransferase 2 (461 aa).

The Cytoplasmic portion of the chain corresponds to 1-20 (MIERCLGAYRCRRIQRALRQ). The helical; Signal-anchor for type II membrane protein transmembrane segment at 21-40 (LKVTILCLLLTVVVLRSTIG) threads the bilayer. At 41 to 461 (AGKFGTPEQD…KAVKVQTNQV (421 aa)) the chain is on the lumenal side. The interval 74 to 95 (QTGGDSSSGDGGGNSGGSNNYE) is disordered. The N-linked (GlcNAc...) asparagine glycan is linked to asparagine 432.

The protein belongs to the glycosyltransferase 34 family. In terms of assembly, homodimer. Interacts with XXT1 and XXT5. Interacts with FUT1 and XLT2.

It is found in the golgi apparatus membrane. It catalyses the reaction Transfers an alpha-D-xylosyl residue from UDP-D-xylose to a glucose residue in xyloglucan, forming an alpha-(1-&gt;6)-D-xylosyl-D-glucose linkage.. Functionally, xylosyltransferase specific to UDP-D-xylose that accepts both cellopentaose and cellohexaose as substrates, with a better use of cellohexaose, to produce xyloglucan. Adds preferentially the first xylosyl residue to the fourth glucosyl residue from the reducing end of both acceptors. Transfer one xylose mainly to the second glucose residue from the non-reducing end. The acceptor should have a minimum of four glucose residues. Associates with other xyloglucan-synthesizing enzymes to form multiprotein complexes for xyloglucan synthesis in the Golgi. In Arabidopsis thaliana (Mouse-ear cress), this protein is Xyloglucan 6-xylosyltransferase 2 (XXT2).